A 542-amino-acid polypeptide reads, in one-letter code: Katanin p60 ATPase-containing subunit A-like 2 (542 aa).

Positions 25–57 (RRKNLLILIMHYLLQEGYMDSANSLEQETKISL) constitute a LisH domain. 2 disordered regions span residues 94-126 (LDHD…RIAQ) and 142-168 (HAHQ…ASEI). Residues 114–126 (GSNSTQGLPRIAQ) are compositionally biased toward polar residues. 298–305 (GPPGTGKT) serves as a coordination point for ATP.

It belongs to the AAA ATPase family. Katanin p60 subunit A1 subfamily. A-like 2 sub-subfamily.

It localises to the cytoplasm. It is found in the cytoskeleton. The protein localises to the spindle. The protein resides in the spindle pole. The enzyme catalyses n ATP + n H2O + a microtubule = n ADP + n phosphate + (n+1) alpha/beta tubulin heterodimers.. Severs microtubules in vitro in an ATP-dependent manner. This activity may promote rapid reorganization of cellular microtubule arrays. This chain is Katanin p60 ATPase-containing subunit A-like 2 (katnal2), found in Xenopus tropicalis (Western clawed frog).